A 25-amino-acid polypeptide reads, in one-letter code: Caerin-1.17 (25 aa).

Residue Leu25 is modified to Leucine amide.

Belongs to the frog skin active peptide (FSAP) family. Caerin subfamily. As to expression, expressed by the skin dorsal glands.

Its subcellular location is the secreted. Functionally, caerin-1.17 shows significant activity against Gram-positive organisms, but is less effective against Gram-negative organisms. This Ranoidea gracilenta (Dainty green tree frog) protein is Caerin-1.17.